Reading from the N-terminus, the 312-residue chain is Zinc transporter ZitB (312 aa).

5 consecutive transmembrane segments (helical) span residues 21-41 (LLFAFIVTAGFMLLEVVGGIL), 48-68 (LADAGHMLTDAAALLFALLAV), 90-110 (AAFVNAIALVVITLLIVWEAI), 123-143 (LMMVIAVAGLLANLFAFWILH), and 164-184 (LLGSVGAIVAALIIIWTGWTP).

It belongs to the cation diffusion facilitator (CDF) transporter (TC 2.A.4) family. SLC30A subfamily.

It is found in the cell inner membrane. Involved in zinc efflux across the cytoplasmic membrane, thus reducing zinc accumulation in the cytoplasm and rendering bacteria more resistant to zinc. It may contribute to zinc homeostasis at low concentrations of zinc. This Salmonella typhimurium (strain LT2 / SGSC1412 / ATCC 700720) protein is Zinc transporter ZitB.